The chain runs to 771 residues: ATP-dependent DNA helicase UvrD1 (771 aa).

Residues 1–21 (MSVHATDAKPPGPSPADQLLD) are disordered. A UvrD-like helicase ATP-binding domain is found at 21–311 (DGLNPQQRQA…ILLEQNYRST (291 aa)). ATP contacts are provided by residues 45–50 (GSGKTA) and Arg309. The UvrD-like helicase C-terminal domain occupies 312 to 603 (QNILSAANSV…TLMTLHTAKG (292 aa)). The tract at residues 691 to 716 (FSAPVSGAGRFGSARPSPTRSGASRR) is disordered.

The protein belongs to the helicase family. UvrD subfamily. As to quaternary structure, monomer. Mg(2+) serves as cofactor.

The catalysed reaction is Couples ATP hydrolysis with the unwinding of duplex DNA by translocating in the 3'-5' direction.. It carries out the reaction ATP + H2O = ADP + phosphate + H(+). In terms of biological role, DNA-dependent ATPase, acting on dsDNA with a 3'-ssDNA tail, unwinding with 3'-to 5'-polarity. Also highly efficient on nicked DNA. Involved in the post-incision events of nucleotide excision repair. This Mycobacterium bovis (strain ATCC BAA-935 / AF2122/97) protein is ATP-dependent DNA helicase UvrD1 (uvrD1).